Consider the following 234-residue polypeptide: Purine nucleoside phosphorylase DeoD-type (234 aa).

Histidine 4 is a binding site for a purine D-ribonucleoside. Phosphate is bound by residues glycine 20, arginine 24, arginine 43, and 87–90 (RIGT). A purine D-ribonucleoside-binding positions include 179–181 (EME) and 203–204 (SD). Aspartate 204 serves as the catalytic Proton donor.

Belongs to the PNP/UDP phosphorylase family. As to quaternary structure, homohexamer; trimer of homodimers.

It catalyses the reaction a purine D-ribonucleoside + phosphate = a purine nucleobase + alpha-D-ribose 1-phosphate. It carries out the reaction a purine 2'-deoxy-D-ribonucleoside + phosphate = a purine nucleobase + 2-deoxy-alpha-D-ribose 1-phosphate. Its function is as follows. Catalyzes the reversible phosphorolytic breakdown of the N-glycosidic bond in the beta-(deoxy)ribonucleoside molecules, with the formation of the corresponding free purine bases and pentose-1-phosphate. In Helicobacter pylori (strain Shi470), this protein is Purine nucleoside phosphorylase DeoD-type.